A 43-amino-acid chain; its full sequence is Protein PsbN (43 aa).

The helical transmembrane segment at 5 to 27 (TLVTISISCLLVSFTGYALYTAF) threads the bilayer.

This sequence belongs to the PsbN family.

The protein localises to the plastid. It is found in the chloroplast thylakoid membrane. In terms of biological role, may play a role in photosystem I and II biogenesis. The protein is Protein PsbN of Pinus koraiensis (Korean pine).